A 241-amino-acid chain; its full sequence is Peptidoglycan endopeptidase RipB (241 aa).

The N-terminal stretch at 1-31 (MRHTRFHPIKLAWITAVVAGLMVGVATPADA) is a signal peptide. Positions 109-241 (RQAVEYVIRR…TPFVTRIIEY (133 aa)) constitute a NlpC/P60 domain. The Nucleophile role is filled by Cys-152. His-201 (proton acceptor) is an active-site residue. Residue Glu-213 is part of the active site.

The protein belongs to the peptidase C40 family. As to quaternary structure, monomer.

Functionally, peptidoglycan endopeptidase that cleaves the bond between D-glutamate and meso-diaminopimelate. Binds high-molecular weight peptidoglycan, but does not degrade it. Required for normal separation of daughter cells after cell division and cell wall integrity. Required for host cell invasion. This chain is Peptidoglycan endopeptidase RipB (ripB), found in Mycobacterium tuberculosis (strain CDC 1551 / Oshkosh).